Here is a 158-residue protein sequence, read N- to C-terminus: Low molecular weight phosphotyrosine protein phosphatase (158 aa).

An N-acetylalanine modification is found at Ala2. The active-site Nucleophile is Cys13. Arg19 is a catalytic residue. Residue Asp130 is the Proton donor of the active site. 2 positions are modified to phosphotyrosine: Tyr132 and Tyr133.

The protein belongs to the low molecular weight phosphotyrosine protein phosphatase family. In terms of assembly, interacts with EPHA2; dephosphorylates EPHA2. Interacts with EPHB1. Interacts with the SH3 domain of SPTAN1. There is no interaction observed for isoform 2. Phosphorylated by LCK. Phosphorylation at Tyr-132 increases its phosphatase activity. In terms of tissue distribution, widely expressed with highest levels in brain and liver and lowest levels in muscle.

It is found in the cytoplasm. It carries out the reaction O-phospho-L-tyrosyl-[protein] + H2O = L-tyrosyl-[protein] + phosphate. It catalyses the reaction a phosphate monoester + H2O = an alcohol + phosphate. With respect to regulation, inhibited by sulfhydryl reagents. Acts on tyrosine phosphorylated proteins, low-MW aryl phosphates and natural and synthetic acyl phosphates with differences in substrate specificity between isoform 1 and isoform 2. In Mus musculus (Mouse), this protein is Low molecular weight phosphotyrosine protein phosphatase.